Consider the following 160-residue polypeptide: Transcription elongation factor GreA (160 aa).

Positions Y11–E38 form a coiled coil.

The protein belongs to the GreA/GreB family.

Its function is as follows. Necessary for efficient RNA polymerase transcription elongation past template-encoded arresting sites. The arresting sites in DNA have the property of trapping a certain fraction of elongating RNA polymerases that pass through, resulting in locked ternary complexes. Cleavage of the nascent transcript by cleavage factors such as GreA or GreB allows the resumption of elongation from the new 3'terminus. GreA releases sequences of 2 to 3 nucleotides. The protein is Transcription elongation factor GreA of Nitratidesulfovibrio vulgaris (strain DSM 19637 / Miyazaki F) (Desulfovibrio vulgaris).